A 150-amino-acid chain; its full sequence is UPF0178 protein Bcep18194_A4809 (150 aa).

The protein belongs to the UPF0178 family.

The protein is UPF0178 protein Bcep18194_A4809 of Burkholderia lata (strain ATCC 17760 / DSM 23089 / LMG 22485 / NCIMB 9086 / R18194 / 383).